Reading from the N-terminus, the 473-residue chain is Cysteine--tRNA ligase (473 aa).

Residue Cys27 participates in Zn(2+) binding. The short motif at 29 to 39 is the 'HIGH' region element; the sequence is ITPYDHMHVGH. Positions 213, 238, and 242 each coordinate Zn(2+). Positions 271 to 275 match the 'KMSKS' region motif; the sequence is KMSKS. Lys274 is an ATP binding site.

It belongs to the class-I aminoacyl-tRNA synthetase family. Requires Zn(2+) as cofactor.

It localises to the cytoplasm. It carries out the reaction tRNA(Cys) + L-cysteine + ATP = L-cysteinyl-tRNA(Cys) + AMP + diphosphate. The chain is Cysteine--tRNA ligase from Pyrobaculum islandicum (strain DSM 4184 / JCM 9189 / GEO3).